Consider the following 28-residue polypeptide: Sarcolamban A (28 aa).

Residues 7–27 form a helical membrane-spanning segment; the sequence is LFTTFGILAILLFFLYLIYAV.

As to quaternary structure, interacts with SERCA. As to expression, strongly expressed in embryonic and larval somatic muscles and postembryonic heart.

Its subcellular location is the sarcoplasmic reticulum membrane. The protein resides in the cell membrane. It is found in the sarcolemma. The protein localises to the T-tubule. Plays an essential role in the regulation of calcium transport at the sarcoplasmic reticulum (SR), which is secondarily required for regular muscle contraction. This is Sarcolamban A from Drosophila melanogaster (Fruit fly).